The primary structure comprises 149 residues: Calmodulin-like protein 3 (149 aa).

EF-hand domains lie at 8 to 43 (EQVTEFKEAFSLFDKDGDGCITTRELGTVMRSLGQN), 44 to 79 (PTEAELRDMMSEIDRDGNGTVDFPEFLGMMARKMKD), 81 to 116 (DNEEEIREAFRVFDKDGNGFVSAAELRHVMTRLGEK), and 117 to 149 (LSDEEVDEMIRAADTDGDGQVNYEEFVRVLVSK). Ca(2+)-binding residues include Asp21, Asp23, Asp25, Cys27, Glu32, Asp57, Asp59, Asn61, Thr63, Glu68, Asp94, Asp96, Asn98, Glu105, Asp130, Asp132, Asp134, Gln136, and Glu141.

It belongs to the calmodulin family. As to quaternary structure, interacts with MYO10, the interaction is calcium-dependent and essential for MYO10 function in filopodial extension. In terms of tissue distribution, expressed in normal mammary, prostate, cervical, and epidermal tissues. It is greatly reduced or undetectable in transformed cells.

Its function is as follows. May function as a specific light chain of unconventional myosin-10 (MYO10), also enhances MYO10 translation, possibly by acting as a chaperone for the emerging MYO10 heavy chain protein. May compete with calmodulin by binding, with different affinities, to cellular substrates. This is Calmodulin-like protein 3 (CALML3) from Homo sapiens (Human).